The sequence spans 431 residues: SPI-1 type 3 secretion system ATPase (431 aa).

Residue 162-167 (GCGKTM) coordinates ATP.

The protein belongs to the ATPase alpha/beta chains family. T3SS ATPase subfamily. The core secretion machinery of the T3SS is composed of approximately 20 different proteins, including cytoplasmic components, a base, an export apparatus and a needle. This subunit is part of the cytosolic complex. Forms homohexamers.

It localises to the cytoplasm. It carries out the reaction ATP + H2O + cellular proteinSide 1 = ADP + phosphate + cellular proteinSide 2.. In terms of biological role, ATPase component of the type III secretion system (T3SS), also called injectisome, which is used to inject bacterial effector proteins into eukaryotic host cells. Acts as a molecular motor to provide the energy that is required for the export of proteins. Required for type III secretion apparatus (T3SA) formation, proper protein secretion, host cell invasion and virulence. May play a critical role in T3SS substrate recognition, disassembly of the effector/chaperone complex and unfolding of the effector in an ATP-dependent manner prior to secretion. The sequence is that of SPI-1 type 3 secretion system ATPase from Salmonella typhi.